The chain runs to 439 residues: 5-methylthioadenosine/S-adenosylhomocysteine deaminase (439 aa).

Residues H70 and H72 each coordinate Zn(2+). E99 and H192 together coordinate substrate. H219 lines the Zn(2+) pocket. Residues E222 and D307 each contribute to the substrate site. A Zn(2+)-binding site is contributed by D307.

This sequence belongs to the metallo-dependent hydrolases superfamily. MTA/SAH deaminase family. Zn(2+) serves as cofactor.

The catalysed reaction is S-adenosyl-L-homocysteine + H2O + H(+) = S-inosyl-L-homocysteine + NH4(+). It carries out the reaction S-methyl-5'-thioadenosine + H2O + H(+) = S-methyl-5'-thioinosine + NH4(+). In terms of biological role, catalyzes the deamination of 5-methylthioadenosine and S-adenosyl-L-homocysteine into 5-methylthioinosine and S-inosyl-L-homocysteine, respectively. Is also able to deaminate adenosine. The sequence is that of 5-methylthioadenosine/S-adenosylhomocysteine deaminase from Thermodesulfovibrio yellowstonii (strain ATCC 51303 / DSM 11347 / YP87).